The chain runs to 358 residues: Aminomethyltransferase (358 aa).

It belongs to the GcvT family. In terms of assembly, the glycine cleavage system is composed of four proteins: P, T, L and H.

The catalysed reaction is N(6)-[(R)-S(8)-aminomethyldihydrolipoyl]-L-lysyl-[protein] + (6S)-5,6,7,8-tetrahydrofolate = N(6)-[(R)-dihydrolipoyl]-L-lysyl-[protein] + (6R)-5,10-methylene-5,6,7,8-tetrahydrofolate + NH4(+). The glycine cleavage system catalyzes the degradation of glycine. The protein is Aminomethyltransferase of Francisella philomiragia subsp. philomiragia (strain ATCC 25017 / CCUG 19701 / FSC 153 / O#319-036).